Reading from the N-terminus, the 95-residue chain is MYGLINIGFGNIVVGDRVIAIVSPTSQPLKRLKEIAEQQGKLLEVNHGRKTRAFIITDSGHVIASAIQPETITNRFLQNYYDIEKVLDKIRKEVL.

The protein belongs to the RemA family.

This Petrotoga mobilis (strain DSM 10674 / SJ95) protein is Putative regulatory protein Pmob_0099.